Consider the following 436-residue polypeptide: Probable glucose-6-phosphate isomerase (436 aa).

The active-site Proton donor is the glutamate 272. Active-site residues include histidine 293 and lysine 404.

Belongs to the GPI family.

It localises to the cytoplasm. It carries out the reaction alpha-D-glucose 6-phosphate = beta-D-fructose 6-phosphate. It participates in carbohydrate biosynthesis; gluconeogenesis. The protein operates within carbohydrate degradation; glycolysis; D-glyceraldehyde 3-phosphate and glycerone phosphate from D-glucose: step 2/4. Its function is as follows. Catalyzes the reversible isomerization of glucose-6-phosphate to fructose-6-phosphate. The protein is Probable glucose-6-phosphate isomerase of Haloarcula marismortui (strain ATCC 43049 / DSM 3752 / JCM 8966 / VKM B-1809) (Halobacterium marismortui).